The sequence spans 167 residues: Acetolactate synthase small subunit (167 aa).

Positions 7 to 81 (TLSVLVEAKP…NVIKIVELED (75 aa)) constitute an ACT domain.

The protein belongs to the acetolactate synthase small subunit family. Dimer of large and small chains.

It carries out the reaction 2 pyruvate + H(+) = (2S)-2-acetolactate + CO2. It participates in amino-acid biosynthesis; L-isoleucine biosynthesis; L-isoleucine from 2-oxobutanoate: step 1/4. Its pathway is amino-acid biosynthesis; L-valine biosynthesis; L-valine from pyruvate: step 1/4. This Mycobacterium avium protein is Acetolactate synthase small subunit (ilvH).